The sequence spans 118 residues: D-dopachrome decarboxylase (118 aa).

At P2 the chain carries N-acetylproline.

This sequence belongs to the MIF family. In terms of assembly, homotrimer.

The protein resides in the cytoplasm. The catalysed reaction is D-dopachrome + H(+) = 5,6-dihydroxyindole + CO2. Functionally, tautomerization of D-dopachrome with decarboxylation to give 5,6-dihydroxyindole (DHI). This Gallus gallus (Chicken) protein is D-dopachrome decarboxylase (DDT).